The chain runs to 289 residues: ATP synthase gamma chain (289 aa).

It belongs to the ATPase gamma chain family. As to quaternary structure, F-type ATPases have 2 components, CF(1) - the catalytic core - and CF(0) - the membrane proton channel. CF(1) has five subunits: alpha(3), beta(3), gamma(1), delta(1), epsilon(1). CF(0) has three main subunits: a, b and c.

The protein resides in the cell inner membrane. Produces ATP from ADP in the presence of a proton gradient across the membrane. The gamma chain is believed to be important in regulating ATPase activity and the flow of protons through the CF(0) complex. This chain is ATP synthase gamma chain, found in Janthinobacterium sp. (strain Marseille) (Minibacterium massiliensis).